The following is a 638-amino-acid chain: Carbon monoxide dehydrogenase (638 aa).

[4Fe-4S] cluster is bound by residues C46, C55, C58, C63, and C74. [Ni-4Fe-5S] cluster is bound by residues H265, C299, C343, C452, C483, and C524.

Belongs to the Ni-containing carbon monoxide dehydrogenase family. In terms of assembly, homodimer. The cofactor is [4Fe-4S] cluster. [Ni-4Fe-5S] cluster is required as a cofactor.

It carries out the reaction CO + 2 oxidized [2Fe-2S]-[ferredoxin] + H2O = 2 reduced [2Fe-2S]-[ferredoxin] + CO2 + 2 H(+). Functionally, CODH oxidizes carbon monoxide coupled, via CooF, to the reduction of a hydrogen cation by a hydrogenase (possibly CooH). In Methanopyrus kandleri (strain AV19 / DSM 6324 / JCM 9639 / NBRC 100938), this protein is Carbon monoxide dehydrogenase (cooS).